Reading from the N-terminus, the 275-residue chain is Dermonecrotic toxin LhSicTox-alphaIV2 (275 aa).

His-5 is a catalytic residue. Mg(2+)-binding residues include Glu-25 and Asp-27. Catalysis depends on His-41, which acts as the Nucleophile. Cystine bridges form between Cys-45–Cys-51 and Cys-47–Cys-192. Asp-85 contributes to the Mg(2+) binding site.

The protein belongs to the arthropod phospholipase D family. Class II subfamily. Requires Mg(2+) as cofactor. As to expression, expressed by the venom gland.

It localises to the secreted. It carries out the reaction an N-(acyl)-sphingosylphosphocholine = an N-(acyl)-sphingosyl-1,3-cyclic phosphate + choline. The enzyme catalyses an N-(acyl)-sphingosylphosphoethanolamine = an N-(acyl)-sphingosyl-1,3-cyclic phosphate + ethanolamine. The catalysed reaction is a 1-acyl-sn-glycero-3-phosphocholine = a 1-acyl-sn-glycero-2,3-cyclic phosphate + choline. It catalyses the reaction a 1-acyl-sn-glycero-3-phosphoethanolamine = a 1-acyl-sn-glycero-2,3-cyclic phosphate + ethanolamine. Its function is as follows. Dermonecrotic toxins cleave the phosphodiester linkage between the phosphate and headgroup of certain phospholipids (sphingolipid and lysolipid substrates), forming an alcohol (often choline) and a cyclic phosphate. This toxin acts on sphingomyelin (SM). It may also act on ceramide phosphoethanolamine (CPE), lysophosphatidylcholine (LPC) and lysophosphatidylethanolamine (LPE), but not on lysophosphatidylserine (LPS), and lysophosphatidylglycerol (LPG). It acts by transphosphatidylation, releasing exclusively cyclic phosphate products as second products. Induces dermonecrosis, hemolysis, increased vascular permeability, edema, inflammatory response, and platelet aggregation. The protein is Dermonecrotic toxin LhSicTox-alphaIV2 of Loxosceles hirsuta (Recluse spider).